The chain runs to 89 residues: Co-chaperonin GroES (89 aa).

It belongs to the GroES chaperonin family. Heptamer of 7 subunits arranged in a ring. Interacts with the chaperonin GroEL.

It localises to the cytoplasm. Its function is as follows. Together with the chaperonin GroEL, plays an essential role in assisting protein folding. The GroEL-GroES system forms a nano-cage that allows encapsulation of the non-native substrate proteins and provides a physical environment optimized to promote and accelerate protein folding. GroES binds to the apical surface of the GroEL ring, thereby capping the opening of the GroEL channel. In Wolinella succinogenes (strain ATCC 29543 / DSM 1740 / CCUG 13145 / JCM 31913 / LMG 7466 / NCTC 11488 / FDC 602W) (Vibrio succinogenes), this protein is Co-chaperonin GroES.